We begin with the raw amino-acid sequence, 178 residues long: Transcription factor E (178 aa).

The HTH TFE/IIEalpha-type domain occupies 3-86; it reads AHEALAEIAG…YWRITDEPIQ (84 aa).

This sequence belongs to the TFE family. As to quaternary structure, monomer. Interaction with RNA polymerase subunits RpoF and RpoE is necessary for Tfe stimulatory transcription activity. Able to interact with Tbp and RNA polymerase in the absence of DNA promoter. Interacts both with the preinitiation and elongation complexes.

Functionally, transcription factor that plays a role in the activation of archaeal genes transcribed by RNA polymerase. Facilitates transcription initiation by enhancing TATA-box recognition by TATA-box-binding protein (Tbp), and transcription factor B (Tfb) and RNA polymerase recruitment. Not absolutely required for transcription in vitro, but particularly important in cases where Tbp or Tfb function is not optimal. It dynamically alters the nucleic acid-binding properties of RNA polymerases by stabilizing the initiation complex and destabilizing elongation complexes. Seems to translocate with the RNA polymerase following initiation and acts by binding to the non template strand of the transcription bubble in elongation complexes. In Thermofilum pendens (strain DSM 2475 / Hrk 5), this protein is Transcription factor E.